Reading from the N-terminus, the 967-residue chain is RNA polymerase-associated protein RapA (967 aa).

The Helicase ATP-binding domain maps to 163 to 337 (EVGQRTAPRV…FARLSLLDPD (175 aa)). 176 to 183 (DEVGLGKT) lines the ATP pocket. The DEAH box signature appears at 283–286 (DEAH). In terms of domain architecture, Helicase C-terminal spans 489 to 660 (RLEWLITFLK…KFLQNPTALE (172 aa)).

Belongs to the SNF2/RAD54 helicase family. RapA subfamily. In terms of assembly, interacts with the RNAP. Has a higher affinity for the core RNAP than for the holoenzyme. Its ATPase activity is stimulated by binding to RNAP.

Its function is as follows. Transcription regulator that activates transcription by stimulating RNA polymerase (RNAP) recycling in case of stress conditions such as supercoiled DNA or high salt concentrations. Probably acts by releasing the RNAP, when it is trapped or immobilized on tightly supercoiled DNA. Does not activate transcription on linear DNA. Probably not involved in DNA repair. This Pasteurella multocida (strain Pm70) protein is RNA polymerase-associated protein RapA.